The following is a 149-amino-acid chain: Large ribosomal subunit protein uL13 (149 aa).

It belongs to the universal ribosomal protein uL13 family. In terms of assembly, part of the 50S ribosomal subunit.

This protein is one of the early assembly proteins of the 50S ribosomal subunit, although it is not seen to bind rRNA by itself. It is important during the early stages of 50S assembly. This is Large ribosomal subunit protein uL13 from Borrelia hermsii (strain HS1 / DAH).